The following is a 488-amino-acid chain: Glutamyl-tRNA(Gln) amidotransferase subunit A (488 aa).

Active-site charge relay system residues include Lys77 and Ser152. Residue Ser176 is the Acyl-ester intermediate of the active site.

The protein belongs to the amidase family. GatA subfamily. In terms of assembly, heterotrimer of A, B and C subunits.

The catalysed reaction is L-glutamyl-tRNA(Gln) + L-glutamine + ATP + H2O = L-glutaminyl-tRNA(Gln) + L-glutamate + ADP + phosphate + H(+). Functionally, allows the formation of correctly charged Gln-tRNA(Gln) through the transamidation of misacylated Glu-tRNA(Gln) in organisms which lack glutaminyl-tRNA synthetase. The reaction takes place in the presence of glutamine and ATP through an activated gamma-phospho-Glu-tRNA(Gln). The chain is Glutamyl-tRNA(Gln) amidotransferase subunit A from Streptococcus uberis (strain ATCC BAA-854 / 0140J).